Consider the following 133-residue polypeptide: Putative biopolymer transport protein ExbD-like 1 (133 aa).

Topologically, residues 1–15 (MNYDNYWDEDKPELN) are cytoplasmic. The chain crosses the membrane as a helical span at residues 16–32 (ITPLVDVMLVLLAILMV). The Periplasmic portion of the chain corresponds to 33-133 (TTPTLTYKEE…FLKVSLITSP (101 aa)).

Belongs to the ExbD/TolR family.

Its subcellular location is the cell inner membrane. This chain is Putative biopolymer transport protein ExbD-like 1, found in Helicobacter pylori (strain ATCC 700392 / 26695) (Campylobacter pylori).